An 89-amino-acid polypeptide reads, in one-letter code: Small ribosomal subunit protein uS15 (89 aa).

It belongs to the universal ribosomal protein uS15 family. In terms of assembly, part of the 30S ribosomal subunit. Forms a bridge to the 50S subunit in the 70S ribosome, contacting the 23S rRNA.

Its function is as follows. One of the primary rRNA binding proteins, it binds directly to 16S rRNA where it helps nucleate assembly of the platform of the 30S subunit by binding and bridging several RNA helices of the 16S rRNA. Functionally, forms an intersubunit bridge (bridge B4) with the 23S rRNA of the 50S subunit in the ribosome. The sequence is that of Small ribosomal subunit protein uS15 from Rhizobium rhizogenes (strain K84 / ATCC BAA-868) (Agrobacterium radiobacter).